A 410-amino-acid chain; its full sequence is Multifunctional CCA protein (410 aa).

The ATP site is built by Gly8 and Arg11. CTP contacts are provided by Gly8 and Arg11. Mg(2+) is bound by residues Asp21 and Asp23. Residues Arg91, Arg137, and Arg140 each coordinate ATP. CTP-binding residues include Arg91, Arg137, and Arg140. The HD domain maps to 228 to 329; the sequence is TGVHVLSVLQ…LELLQSFDVY (102 aa).

The protein belongs to the tRNA nucleotidyltransferase/poly(A) polymerase family. Bacterial CCA-adding enzyme type 1 subfamily. As to quaternary structure, monomer. Can also form homodimers and oligomers. Mg(2+) is required as a cofactor. The cofactor is Ni(2+).

It carries out the reaction a tRNA precursor + 2 CTP + ATP = a tRNA with a 3' CCA end + 3 diphosphate. The catalysed reaction is a tRNA with a 3' CCA end + 2 CTP + ATP = a tRNA with a 3' CCACCA end + 3 diphosphate. Functionally, catalyzes the addition and repair of the essential 3'-terminal CCA sequence in tRNAs without using a nucleic acid template. Adds these three nucleotides in the order of C, C, and A to the tRNA nucleotide-73, using CTP and ATP as substrates and producing inorganic pyrophosphate. tRNA 3'-terminal CCA addition is required both for tRNA processing and repair. Also involved in tRNA surveillance by mediating tandem CCA addition to generate a CCACCA at the 3' terminus of unstable tRNAs. While stable tRNAs receive only 3'-terminal CCA, unstable tRNAs are marked with CCACCA and rapidly degraded. This is Multifunctional CCA protein from Pseudomonas aeruginosa (strain ATCC 15692 / DSM 22644 / CIP 104116 / JCM 14847 / LMG 12228 / 1C / PRS 101 / PAO1).